Reading from the N-terminus, the 301-residue chain is Mitochondrial substrate carrier family protein Z (301 aa).

The Mitochondrial intermembrane segment spans residues 1 to 19 (MTGKEENKQQQHVNFPWKR). 3 Solcar repeats span residues 14–101 (NFPW…FTEQ), 116–200 (QQFG…ISDY), and 210–293 (LPVW…VMGI). Residues 20–37 (LVAGAVAGTADVWACHPL) form a helical membrane-spanning segment. At 38–65 (DRIKTQLQNNPGKSIVGTFGDIVSKGKG) the chain is on the mitochondrial matrix side. The helical transmembrane segment at 66 to 86 (FTGGVNALYEGILPMTAEAIF) threads the bilayer. The Mitochondrial intermembrane portion of the chain corresponds to 87–117 (KVGIRYFAFSWFTEQYKTTVYKGETLNKKQQ). The helical transmembrane segment at 118–138 (FGANLLGGAFAGTIESFVVVI) threads the bilayer. At 139 to 174 (PCELLKVRHMTQEHNKSFGTVFRDVLREEGFQGLYK) the chain is on the mitochondrial matrix side. Residues 175–191 (GGSATLLRQITNHMIRF) traverse the membrane as a helical segment. Topologically, residues 192-212 (PTFYAISDYLKGGDHSVHLPV) are mitochondrial intermembrane. The helical transmembrane segment at 213–229 (WQNLSAGAIAGTASTLF) threads the bilayer. The Mitochondrial matrix portion of the chain corresponds to 230 to 275 (NNPLDTIKTRMQKQGQNQTTMQVVRGIYQETGVKGYWAGVIPRILR). Residues 276–296 (VAPGQAITWAVVELVMGILEP) form a helical membrane-spanning segment. At 297 to 301 (SSKKH) the chain is on the mitochondrial intermembrane side.

Belongs to the mitochondrial carrier (TC 2.A.29) family.

The protein localises to the mitochondrion inner membrane. Its function is as follows. Mitochondrial solute carriers shuttle metabolites, nucleotides, and cofactors through the mitochondrial inner membrane. The chain is Mitochondrial substrate carrier family protein Z (mcfZ) from Dictyostelium discoideum (Social amoeba).